The sequence spans 519 residues: Cytochrome P450 52A13 (519 aa).

Cysteine 466 provides a ligand contact to heme.

Belongs to the cytochrome P450 family. It depends on heme as a cofactor.

The protein resides in the membrane. Together with an NADPH cytochrome P450 the enzyme system catalyzes the terminal hydroxylation as the first step in the assimilation of alkanes and fatty acids. The chain is Cytochrome P450 52A13 (CYP52A13) from Debaryomyces hansenii (Yeast).